The sequence spans 443 residues: Cyclic GMP-AMP synthase (443 aa).

S61 lines the ATP pocket. Active-site residues include D78 and D80. D80 serves as a coordination point for Mg(2+). Residue N124 participates in ATP binding. D138 is an active-site residue. D138 is a binding site for Mg(2+). L208 contributes to the ATP binding site.

This sequence belongs to the CD-NTase family. B06 subfamily. It depends on Mg(2+) as a cofactor.

It carries out the reaction GTP + ATP = 3',3'-cGAMP + 2 diphosphate. The enzyme catalyses UTP + ATP = 3',3'-cUAMP + 2 diphosphate. It catalyses the reaction 2 ATP = 3',3'-c-di-AMP + 2 diphosphate. The catalysed reaction is 2 GTP = 3',3'-c-di-GMP + 2 diphosphate. It carries out the reaction UTP + GTP = 3',3'-cGMP-UMP + 2 diphosphate. Its function is as follows. Cyclic nucleotide synthase (second messenger synthase) of a CBASS antivirus system. CBASS (cyclic oligonucleotide-based antiphage signaling system) provides immunity against bacteriophages. The CD-NTase protein (CdnB, this protein) synthesizes cyclic nucleotides in response to infection; these serve as specific second messenger signals. The signals activate a diverse range of effectors, leading to bacterial cell death and thus abortive phage infection. The effector protein for this system is membrane protein Cap15. Functionally, catalyzes the synthesis of 3',3'-cyclic GMP-AMP (3'3'-cGAMP) from GTP and ATP, a second messenger in cell signal transduction. Also makes cyclic UMP-AMP, cyclic UMP-GMP, cyclic di-AMP and cyclic-di-GMP. In terms of biological role, protects E.coli against phage infection. When the CBASS operon (cdnB-cap15) is introduced in E.coli MG1655 there is about 100-fold protection against phage T2 and about 10-fold protection against phage T5 and T6. The protein is Cyclic GMP-AMP synthase of Escherichia albertii.